We begin with the raw amino-acid sequence, 351 residues long: Aromatic amino acid aminotransferase (351 aa).

An N6-(pyridoxal phosphate)lysine modification is found at lysine 215.

This sequence belongs to the class-II pyridoxal-phosphate-dependent aminotransferase family. As to quaternary structure, homodimer. It depends on pyridoxal 5'-phosphate as a cofactor.

The catalysed reaction is an aromatic L-alpha-amino acid + 2-oxoglutarate = an aromatic oxo-acid + L-glutamate. Its function is as follows. Aminotransferase that catalyzes the conversion of aromatic amino acids and 2-oxoglutarate into corresponding aromatic oxo acids and L-glutamate. The polypeptide is Aromatic amino acid aminotransferase (Mycolicibacterium vanbaalenii (strain DSM 7251 / JCM 13017 / BCRC 16820 / KCTC 9966 / NRRL B-24157 / PYR-1) (Mycobacterium vanbaalenii)).